The sequence spans 172 residues: Biogenesis of lysosome-related organelles complex 1 subunit 6 (172 aa).

2 disordered regions span residues 1 to 36 (MSVP…SPDE) and 135 to 172 (RALK…AKRT). The stretch at 125-167 (LHEKTSKLKKRALKLQQKRQKEELEREQQREKEFEREKQLTAK) forms a coiled coil. Basic and acidic residues predominate over residues 143-164 (RQKEELEREQQREKEFEREKQL).

It belongs to the BLOC1S6 family. In terms of assembly, homodimer. Octamer composed of one copy each BLOC1S1, BLOC1S2, BLOC1S3, BLOC1S4, BLOC1S5, BLOC1S6, DTNBP1/BLOC1S7 and SNAPIN/BLOC1S8. The BLOC-1 complex associates with the AP-3 protein complex and membrane protein cargos. Interacts with BLOC1S4, BLOC1S5, DTNBP1/BLOC1S7, F-actin. Component of the biogenesis of lysosome-related organelles complex 1 (BLOC-1) composed of BLOC1S1, BLOC1S2, BLOC1S3, BLOC1S4, BLOC1S5, BLOC1S6, DTNBP1/BLOC1S7 and SNAPIN/BLOC1S8. Interacts with SNAP25, SNAP47 and STX12.

It localises to the cytoplasm. The protein resides in the membrane. Its function is as follows. Component of the BLOC-1 complex, a complex that is required for normal biogenesis of lysosome-related organelles (LRO), such as platelet dense granules and melanosomes. In concert with the AP-3 complex, the BLOC-1 complex is required to target membrane protein cargos into vesicles assembled at cell bodies for delivery into neurites and nerve terminals. The BLOC-1 complex, in association with SNARE proteins, is also proposed to be involved in neurite extension. May play a role in intracellular vesicle trafficking, particularly in the vesicle-docking and fusion process. The sequence is that of Biogenesis of lysosome-related organelles complex 1 subunit 6 (BLOC1S6) from Bos taurus (Bovine).